The chain runs to 481 residues: Mediator of RNA polymerase II transcription subunit 3 (481 aa).

Residues 79–107 (QEKFQMIRSKVLGLTERLQELSNDFEELQ) are a coiled coil. Disordered stretches follow at residues 140–261 (AGAS…MGTP) and 415–463 (NTKG…KSAY). Over residues 148–203 (TPTPAAATPTTAPTPGAGTKKAAKTAPTPTATATIGTPSNNAPTPATTATTPGTQA) the composition is skewed to low complexity. Residues 204 to 213 (KKPRKPRQTK) are compositionally biased toward basic residues. Positions 214 to 248 (KQQQAAAAAAAVAQAQAQAQAQAQNQNQNNMQNKN) are enriched in low complexity. Residues 249–259 (ISNPGMNSNMG) are compositionally biased toward polar residues. Residues 428-458 (MDQNQNQNQSQNQSQNQNQSMNMNMNNDSNN) are compositionally biased toward low complexity.

The protein belongs to the Mediator complex subunit 3 family. As to quaternary structure, component of the Mediator complex.

It localises to the nucleus. Its function is as follows. Component of the Mediator complex, a coactivator involved in regulated gene transcription of nearly all RNA polymerase II-dependent genes. Mediator functions as a bridge to convey information from gene-specific regulatory proteins to the basal RNA polymerase II transcription machinery. Mediator is recruited to promoters by direct interactions with regulatory proteins and serves as a scaffold for the assembly of a functional preinitiation complex with RNA polymerase II and the general transcription factors. The protein is Mediator of RNA polymerase II transcription subunit 3 (PGD1) of Candida glabrata (strain ATCC 2001 / BCRC 20586 / JCM 3761 / NBRC 0622 / NRRL Y-65 / CBS 138) (Yeast).